The sequence spans 213 residues: MSLGILGTKLGMTQIFDNETGTAIPVTVVQAGPCTVTQIKTSETDGYTSVQIGYGDVKEKNLTKPQLGHLKKADAAPLRHLKEYRLDDVSGYELGQAITANIFEAGQVVDVSGNTIGRGFAGYQKRHNFKRGNMTHGSKNHRLPGSTGAGTTPGRVYPGKRMAGRYGGTKITVRKLEVVRVDEEKNLLLIKGAIPGKAGNLLSIAPSNIVGQK.

The interval 130 to 161 (KRGNMTHGSKNHRLPGSTGAGTTPGRVYPGKR) is disordered.

Belongs to the universal ribosomal protein uL3 family. As to quaternary structure, part of the 50S ribosomal subunit. Forms a cluster with proteins L14 and L19.

Its function is as follows. One of the primary rRNA binding proteins, it binds directly near the 3'-end of the 23S rRNA, where it nucleates assembly of the 50S subunit. The sequence is that of Large ribosomal subunit protein uL3 from Picosynechococcus sp. (strain ATCC 27264 / PCC 7002 / PR-6) (Agmenellum quadruplicatum).